Reading from the N-terminus, the 429-residue chain is Gamma-glutamyl phosphate reductase (429 aa).

This sequence belongs to the gamma-glutamyl phosphate reductase family.

The protein localises to the cytoplasm. The catalysed reaction is L-glutamate 5-semialdehyde + phosphate + NADP(+) = L-glutamyl 5-phosphate + NADPH + H(+). It participates in amino-acid biosynthesis; L-proline biosynthesis; L-glutamate 5-semialdehyde from L-glutamate: step 2/2. Catalyzes the NADPH-dependent reduction of L-glutamate 5-phosphate into L-glutamate 5-semialdehyde and phosphate. The product spontaneously undergoes cyclization to form 1-pyrroline-5-carboxylate. In Nocardioides sp. (strain ATCC BAA-499 / JS614), this protein is Gamma-glutamyl phosphate reductase.